The chain runs to 257 residues: Protein KlaA (257 aa).

Its function is as follows. Belongs to the kla operon, which is associated with cryptic tellurite resistance, and IncW plasmid fertility inhibition. This Escherichia coli protein is Protein KlaA (klaA).